Here is a 121-residue protein sequence, read N- to C-terminus: Fluoride-specific ion channel FluC 1 (121 aa).

The next 4 helical transmembrane spans lie at 3 to 23, 35 to 55, 64 to 84, and 92 to 112; these read YVYI…ISFL, IANL…IAFF, AITT…LELI, and FITL…LCYV. Na(+) is bound by residues G71 and T74.

Belongs to the fluoride channel Fluc/FEX (TC 1.A.43) family.

The protein localises to the cell membrane. It catalyses the reaction fluoride(in) = fluoride(out). Na(+) is not transported, but it plays an essential structural role and its presence is essential for fluoride channel function. Fluoride-specific ion channel. Important for reducing fluoride concentration in the cell, thus reducing its toxicity. The polypeptide is Fluoride-specific ion channel FluC 1 (Staphylococcus aureus (strain NCTC 8325 / PS 47)).